We begin with the raw amino-acid sequence, 177 residues long: Large ribosomal subunit protein uL6 (177 aa).

As to quaternary structure, part of the 50S ribosomal subunit.

In terms of biological role, this protein binds to the 23S rRNA, and is important in its secondary structure. It is located near the subunit interface in the base of the L7/L12 stalk, and near the tRNA binding site of the peptidyltransferase center. In Rhodopseudomonas palustris (strain ATCC BAA-98 / CGA009), this protein is Large ribosomal subunit protein uL6.